The following is a 171-amino-acid chain: Tubulin polymerization-promoting protein family member 2 (171 aa).

The tract at residues leucine 120–asparagine 171 is disordered. Basic and acidic residues predominate over residues threonine 129 to valine 149.

The protein belongs to the TPPP family.

Its subcellular location is the cytoplasm. The protein resides in the cytosol. It is found in the cell projection. The protein localises to the cilium. It localises to the flagellum. Functionally, probable regulator of microtubule dynamics required for sperm motility. In contrast to other members of the family, has no microtubule bundling activity. This chain is Tubulin polymerization-promoting protein family member 2, found in Bos taurus (Bovine).